The primary structure comprises 103 residues: Large ribosomal subunit protein bL21 (103 aa).

It belongs to the bacterial ribosomal protein bL21 family. In terms of assembly, part of the 50S ribosomal subunit. Contacts protein L20.

This protein binds to 23S rRNA in the presence of protein L20. The chain is Large ribosomal subunit protein bL21 from Hahella chejuensis (strain KCTC 2396).